Consider the following 168-residue polypeptide: Large ribosomal subunit protein uL10 (168 aa).

The protein belongs to the universal ribosomal protein uL10 family. In terms of assembly, part of the ribosomal stalk of the 50S ribosomal subunit. The N-terminus interacts with L11 and the large rRNA to form the base of the stalk. The C-terminus forms an elongated spine to which L12 dimers bind in a sequential fashion forming a multimeric L10(L12)X complex.

Its function is as follows. Forms part of the ribosomal stalk, playing a central role in the interaction of the ribosome with GTP-bound translation factors. The chain is Large ribosomal subunit protein uL10 (rplJ) from Mycoplasmopsis pulmonis (strain UAB CTIP) (Mycoplasma pulmonis).